Reading from the N-terminus, the 242-residue chain is Hairy and enhancer of split-related protein HELT (242 aa).

Positions 10–65 (RTPVSHKVIEKRRRDRINRCLNELGKTVPMALAKQSSGKLEKAEILEMTVQYLRAL) constitute a bHLH domain. Lys48 is subject to N6-acetyllysine. An Orange domain is found at 87–122 (FHYGYHECMKNLVHYLTTVERMETKDTKYARILAFL).

The protein belongs to the HEY family. As to quaternary structure, self-associates. Interacts with HES5 and HEY2.

Its subcellular location is the nucleus. In terms of biological role, transcriptional repressor which binds preferentially to the canonical E box sequence 5'-CACGCG-3'. In Homo sapiens (Human), this protein is Hairy and enhancer of split-related protein HELT (HELT).